The following is a 258-amino-acid chain: 5'-nucleotidase SurE (258 aa).

A divalent metal cation contacts are provided by Asp14, Asp15, Ser45, and Asn101.

It belongs to the SurE nucleotidase family. A divalent metal cation serves as cofactor.

It is found in the cytoplasm. The catalysed reaction is a ribonucleoside 5'-phosphate + H2O = a ribonucleoside + phosphate. In terms of biological role, nucleotidase that shows phosphatase activity on nucleoside 5'-monophosphates. This is 5'-nucleotidase SurE from Chlorobium limicola (strain DSM 245 / NBRC 103803 / 6330).